The chain runs to 75 residues: Small ribosomal subunit protein eS31 (75 aa).

Residues Cys41, Cys44, Cys60, and Cys63 each contribute to the Zn(2+) site. Residues 41-63 (CPRCGSIMAHHLKPNERWSCGKC) form a C4-type zinc finger.

The protein belongs to the eukaryotic ribosomal protein eS31 family. Part of the 30S ribosomal subunit. Requires Zn(2+) as cofactor.

The chain is Small ribosomal subunit protein eS31 from Saccharolobus solfataricus (strain ATCC 35092 / DSM 1617 / JCM 11322 / P2) (Sulfolobus solfataricus).